Reading from the N-terminus, the 367-residue chain is Probable glutamine synthetase (367 aa).

The 81-residue stretch at 30–110 (IQATYVWIDG…VMCDTLDHQM (81 aa)) folds into the GS beta-grasp domain. The GS catalytic domain occupies 117–367 (HRQACAEIMH…TAMIAQSILF (251 aa)).

Belongs to the glutamine synthetase family. Homooctamer.

The protein resides in the cytoplasm. The catalysed reaction is L-glutamate + NH4(+) + ATP = L-glutamine + ADP + phosphate + H(+). The sequence is that of Probable glutamine synthetase (gln-2) from Caenorhabditis elegans.